The following is a 283-amino-acid chain: Pantothenate synthetase (283 aa).

30 to 37 (MGYLHEGH) contacts ATP. Histidine 37 functions as the Proton donor in the catalytic mechanism. Residue glutamine 61 participates in (R)-pantoate binding. A beta-alanine-binding site is contributed by glutamine 61. Residue 147–150 (GQKD) participates in ATP binding. A (R)-pantoate-binding site is contributed by glutamine 153. ATP is bound by residues valine 176 and 184 to 187 (MSSR).

It belongs to the pantothenate synthetase family. As to quaternary structure, homodimer.

Its subcellular location is the cytoplasm. It catalyses the reaction (R)-pantoate + beta-alanine + ATP = (R)-pantothenate + AMP + diphosphate + H(+). It participates in cofactor biosynthesis; (R)-pantothenate biosynthesis; (R)-pantothenate from (R)-pantoate and beta-alanine: step 1/1. In terms of biological role, catalyzes the condensation of pantoate with beta-alanine in an ATP-dependent reaction via a pantoyl-adenylate intermediate. The sequence is that of Pantothenate synthetase from Thermoanaerobacter pseudethanolicus (strain ATCC 33223 / 39E) (Clostridium thermohydrosulfuricum).